The following is a 306-amino-acid chain: Non-specific ribonucleoside hydrolase RihC (306 aa).

The active site involves His235.

It belongs to the IUNH family. RihC subfamily.

Its function is as follows. Hydrolyzes both purine and pyrimidine ribonucleosides with a broad-substrate specificity. The protein is Non-specific ribonucleoside hydrolase RihC of Salmonella schwarzengrund (strain CVM19633).